Here is a 555-residue protein sequence, read N- to C-terminus: Carboxylesterase patB (555 aa).

A signal peptide spans 1 to 16 (MLFTASLLLLLPWASA). N-linked (GlcNAc...) asparagine glycans are attached at residues Asn37 and Asn75. The active-site Acyl-ester intermediate is the Ser258. Position 258 (Ser258) interacts with substrate. N-linked (GlcNAc...) asparagine glycosylation is present at Asn311. The active-site Charge relay system is the Glu380. Residues Asn388 and Asn491 are each glycosylated (N-linked (GlcNAc...) asparagine).

The protein belongs to the type-B carboxylesterase/lipase family.

It localises to the cytoplasm. The protein localises to the cytosol. The enzyme catalyses a carboxylic ester + H2O = an alcohol + a carboxylate + H(+). Its pathway is mycotoxin biosynthesis; patulin biosynthesis. Carboxylesterase; part of the gene cluster that mediates the biosynthesis of patulin, an acetate-derived tetraketide mycotoxin produced by several fungal species that shows antimicrobial properties against several bacteria. The function of patB in patulin synthesis has still to be characterized. The pathway begins with the synthesis of 6-methylsalicylic acid by the polyketide synthase (PKS) patK via condensation of acetate and malonate units. The 6-methylsalicylic acid decarboxylase patG then catalyzes the decarboxylation of 6-methylsalicylic acid to yield m-cresol (also known as 3-methylphenol). These first reactions occur in the cytosol. The intermediate m-cresol is then transported into the endoplasmic reticulum where the cytochrome P450 monooxygenase patH converts it to m-hydroxybenzyl alcohol, which is further converted to gentisyl alcohol by the cytochrome P450 monooxygenase patI. The oxidoreductases patJ and patO further convert gentisyl alcohol to isoepoxydon in the vacuole. PatN catalyzes then the transformation of isoepoxydon into phyllostine. The cluster protein patF is responsible for the conversion from phyllostine to neopatulin whereas the alcohol dehydrogenase patD converts neopatulin to E-ascladiol. The steps between isoepoxydon and E-ascladiol occur in the cytosol, and E-ascladiol is probably secreted to the extracellular space by one of the cluster-specific transporters patC or patM. Finally, the secreted patulin synthase patE catalyzes the conversion of E-ascladiol to patulin. This is Carboxylesterase patB from Aspergillus clavatus (strain ATCC 1007 / CBS 513.65 / DSM 816 / NCTC 3887 / NRRL 1 / QM 1276 / 107).